A 1233-amino-acid polypeptide reads, in one-letter code: MGTKWTEEQKQAITTRGSNLLVAAAAGSGKTAVLVERIINLITDEENPVDIDRLLVVTFTNAAASEMRERIAEALIAILDQNPEDKRLANQLTLLNKATITTIHSFCLEVVRNNFFLLDLDPNFRIGDDTETLLLQLEASEELFEEMYAKEDKDKEGFLTLVESYGGTKDDQDLQDILLRLYGFVRSLPWPEKWLKDVINTFRVEDNFKFETSKWAEVILDSLKVEISGILNTMLVAVDKLKNEAGLEGYFHAFQREAYEIEQLLQYDNWNEFKNHIQAIEFERLPNAGKDANKNVKEEVSNIRKKVKDKIKEIKEKFFSDSVEEIKDEIKALYPIMEALADLILLFDKKYKEKKREKGIIDFNDIEHFALQILTEIDEEGAVNPSEVALHYREKFEEIFVDEYQDSNLIQEEILSIIARENPPNRFMVGDVKQSIYRFRQANPYIFFEKYNSYSLDTGEKNQKILLYKNFRSRIEVIEAINYIFKKIMSKNIGEVNYTEEEKLNYGAEYEIPPEDSVTGGAVELHLIEKQKVEEEVEEKEEEKNEEKDFEEEEEDLIDDIQVEARVVAERIKQLFSQNFMVYDKNIKSYRVVDYRDIVVLLRATDRWAPVFLEELTQAGIPAFADTGTGYFDTTEIKTIISLLQVIDNPMQDIPLLAVLRSPIFSFTEEELIDLRLEDMEKTIYEAIKKASQREDELGEKAKNFLDTLKKWQEKAVYMPVDEFLWYLYKDTGYYSYVAAMPQGVQRQANLRILFERAKQYEETSFKGLFNFINFINRLKVSSGDMGSAKIVGENENVVRIMSIHKSKGLEFPVVIVAGLGKQFNTKDLYQKILYHHFLGLGPEFVDFRRRISYPSIVKEAIKYKIKLEGLSEEMRVLYVALTRAKEKLILVGSARDIKKNVRKWANAAILQEKVSEYDILNGKSYMDWIGAAVIRHKDLEPLREFAGVSLSEEEDASKWEVKLWNKKDVLLEKEKNDKVDVVERLRSLDLDAHYSEFYKEVERRLNYVYPYEKACYLPAKLSVTEVKRILNAEVVDEDTTSIFEREVLKTPIFLEKKKGLTAAEKGIAMHLVMQKLDLDKDLSLEGIKEQIKDMVDREILTEEQAKEVNIHKIEGFFKTSLGERMLSSKNVKREVPFHIKLSSREIYKDLPEEYENEFIQVQGIIDCFFEEEDGLVLIDYKTDYVQEGKVEEIKERYKVQIELYSKALENITGKKVKEKYIYLFFNGNILEY.

The UvrD-like helicase ATP-binding domain occupies 3-474 (TKWTEEQKQA…ILLYKNFRSR (472 aa)). 24 to 31 (AAAGSGKT) contacts ATP. The 292-residue stretch at 518-809 (VTGGAVELHL…RIMSIHKSKG (292 aa)) folds into the UvrD-like helicase C-terminal domain. A disordered region spans residues 533–555 (VEEEVEEKEEEKNEEKDFEEEEE).

This sequence belongs to the helicase family. AddA subfamily. Heterodimer of AddA and AddB/RexB. Mg(2+) serves as cofactor.

The catalysed reaction is Couples ATP hydrolysis with the unwinding of duplex DNA by translocating in the 3'-5' direction.. The enzyme catalyses ATP + H2O = ADP + phosphate + H(+). In terms of biological role, the heterodimer acts as both an ATP-dependent DNA helicase and an ATP-dependent, dual-direction single-stranded exonuclease. Recognizes the chi site generating a DNA molecule suitable for the initiation of homologous recombination. The AddA nuclease domain is required for chi fragment generation; this subunit has the helicase and 3' -&gt; 5' nuclease activities. The polypeptide is ATP-dependent helicase/nuclease subunit A (Thermoanaerobacter pseudethanolicus (strain ATCC 33223 / 39E) (Clostridium thermohydrosulfuricum)).